We begin with the raw amino-acid sequence, 414 residues long: Peptide chain release factor subunit 1 (414 aa).

The protein belongs to the eukaryotic release factor 1 family. Heterodimer of two subunits, one of which binds GTP.

It localises to the cytoplasm. Directs the termination of nascent peptide synthesis (translation) in response to the termination codons UAA, UAG and UGA. The sequence is that of Peptide chain release factor subunit 1 from Methanococcoides burtonii (strain DSM 6242 / NBRC 107633 / OCM 468 / ACE-M).